The following is a 418-amino-acid chain: Glycine betaine transport ATP-binding protein OpuAA (418 aa).

The 237-residue stretch at 34–270 folds into the ABC transporter domain; it reads KTKKEILKAT…PSNEYVEKFV (237 aa). 66-73 is an ATP binding site; the sequence is GLSGSGKS. CBS domains are found at residues 284–340 and 344–403; these read IMKR…DLSL and LNTE…INAE.

This sequence belongs to the ABC transporter superfamily. As to quaternary structure, the complex is composed of two ATP-binding proteins (OpuAA), two transmembrane proteins (OpuAB) and a solute-binding protein (OpuAC).

It catalyses the reaction a quaternary ammonium(out) + ATP + H2O = a quaternary ammonium(in) + ADP + phosphate + H(+). Functionally, involved in a multicomponent binding-protein-dependent transport system for glycine betaine. Probably responsible for energy coupling to the transport system. This chain is Glycine betaine transport ATP-binding protein OpuAA (opuAA), found in Bacillus subtilis (strain 168).